The following is a 107-amino-acid chain: High mobility group protein HMG-I/HMG-Y (107 aa).

Residues 1–13 (MSESVSKSSQPLA) show a composition bias toward polar residues. The disordered stretch occupies residues 1-107 (MSESVSKSSQ…ISQESSEEEQ (107 aa)). S2 is subject to N-acetylserine. K7 is modified (N6-acetyllysine). Position 8 is an ADP-ribosylserine (S8). S9 is modified (ADP-ribosylserine; alternate). Residue S9 is modified to Phosphoserine; alternate. At K15 the chain carries N6-acetyllysine; alternate. K15 is covalently cross-linked (Glycyl lysine isopeptide (Lys-Gly) (interchain with G-Cter in SUMO2); alternate). Residues 15–24 (KQEKDGTEKR) show a composition bias toward basic and acidic residues. Positions 21 to 31 (TEKRGRGRPRK) form a DNA-binding region, a.T hook 1. Residue R26 is modified to Asymmetric dimethylarginine; alternate. At R26 the chain carries Omega-N-methylarginine; alternate. Symmetric dimethylarginine; alternate is present on R26. S36 carries the post-translational modification Phosphoserine; by HIPK2 and CDC2. Residue T39 is modified to Phosphothreonine. S44 and S49 each carry phosphoserine. T53 carries the post-translational modification Phosphothreonine; by HIPK2 and CDC2. 2 DNA-binding regions (a.T hook) span residues 53-63 (TPKRPRGRPKG) and 78-89 (TPGRKPRGRPKK). The interaction with HIPK2 stretch occupies residues 53–77 (TPKRPRGRPKGSKNKGTAKTRKVTT). The span at 55-74 (KRPRGRPKGSKNKGTAKTRK) shows a compositional bias: basic residues. Asymmetric dimethylarginine; by PRMT6; alternate occurs at positions 58 and 60. An omega-N-methylarginine; by PRMT6; alternate mark is found at R58 and R60. T78 carries the post-translational modification Phosphothreonine; by HIPK2 and CDC2. Residues 93-107 (EEEEGISQESSEEEQ) show a composition bias toward acidic residues. Residues S99, S102, and S103 each carry the phosphoserine modification.

It belongs to the HMGA family. Interacts with HIPK2. Post-translationally, isoforms HMG-I and HMG-Y can be phosphorylated by HIPK2. Phosphorylation may modulate DNA-binding affinity. In terms of processing, methylation at Arg-58 is mutually exclusive with methylation at Arg-60.

It is found in the nucleus. The protein localises to the chromosome. Functionally, HMG-I/Y bind preferentially to the minor groove of A+T rich regions in double-stranded DNA. It is suggested that these proteins could function in nucleosome phasing and in the 3'-end processing of mRNA transcripts. They are also involved in the transcription regulation of genes containing, or in close proximity to A+T-rich regions. In Rattus norvegicus (Rat), this protein is High mobility group protein HMG-I/HMG-Y (Hmga1).